A 238-amino-acid chain; its full sequence is Uridylate kinase (238 aa).

Residue 12-15 participates in ATP binding; the sequence is KLSG. Position 54 (glycine 54) interacts with UMP. Residues glycine 55 and arginine 59 each coordinate ATP. Residues aspartate 74 and 135-142 contribute to the UMP site; that span reads TGNPFFTT. Positions 162, 168, and 171 each coordinate ATP.

It belongs to the UMP kinase family. Homohexamer.

Its subcellular location is the cytoplasm. The enzyme catalyses UMP + ATP = UDP + ADP. The protein operates within pyrimidine metabolism; CTP biosynthesis via de novo pathway; UDP from UMP (UMPK route): step 1/1. Its activity is regulated as follows. Inhibited by UTP. Catalyzes the reversible phosphorylation of UMP to UDP. The protein is Uridylate kinase of Dechloromonas aromatica (strain RCB).